The following is a 191-amino-acid chain: Large ribosomal subunit protein uL5 (191 aa).

Belongs to the universal ribosomal protein uL5 family. In terms of assembly, part of the 50S ribosomal subunit; part of the 5S rRNA/L5/L18/L25 subcomplex. Contacts the 5S rRNA and the P site tRNA. Forms a bridge to the 30S subunit in the 70S ribosome.

Functionally, this is one of the proteins that bind and probably mediate the attachment of the 5S RNA into the large ribosomal subunit, where it forms part of the central protuberance. In the 70S ribosome it contacts protein S13 of the 30S subunit (bridge B1b), connecting the 2 subunits; this bridge is implicated in subunit movement. Contacts the P site tRNA; the 5S rRNA and some of its associated proteins might help stabilize positioning of ribosome-bound tRNAs. The protein is Large ribosomal subunit protein uL5 of Salinibacter ruber (strain DSM 13855 / M31).